The chain runs to 702 residues: MARKTPIERYRNIGISAHIDAGKTTTTERILFYTGVNHKIGEVHDGAATMDWMEQEQERGITITSAATTAFWKGMGGNYPEHRFNIIDTPGHVDFTIEVERSMRVLDGACMVYCAVGGVQPQSETVWRQANKYKVPRLAFVNKMDRTGANFFKVYDQLKTRLKANPVPVVVPIGAEDGFQGVVDLLEMKAIIWDEASQGVKFEYQDIPAELQATADEWREKMVESAAEASEELMEKYLGGEELTRAEIVKALRDRTIACEIQPMLCGTAFKNKGVQRMLDAVIDFLPSPVDIPPVTGTDEDDSEKKLERKADDTEKFSALAFKIMTDPFVGQLIFFRVYSGKINSGDTVYNPVKQKKERLGRILQMHANQREEIKEVLAGDIAAAVGLKDATTGDTLCDPAAPIVLERMIFPEPVISQAVEPKTKADQEKMGIALNRLAAEDPSFRVRTDEESGQTIISGMGELHLEILVDRMKREFGVEANIGAPQVAYRETIRKTAEGVEGKFVKQSGGRGQYGHAVITLEPQEPGKGFEFIDAIKGGVIPREYIPAVEKGIVDTLPSGILAGFPVVDVKVTLTFGSYHDVDSNENAFRMAGSMAFKEAMRKASPVLLEPMMAVEVETPEDYTGTVMGDLSSRRGIVQGMDDMVGGGKIIKAEVPLSEMFGYSTSLRSATQGRATYTMEFKHYAEAPKNIAEAVMAAKGK.

Residues 8–290 (ERYRNIGISA…AVIDFLPSPV (283 aa)) form the tr-type G domain. Residues 17 to 24 (AHIDAGKT), 88 to 92 (DTPGH), and 142 to 145 (NKMD) each bind GTP.

Belongs to the TRAFAC class translation factor GTPase superfamily. Classic translation factor GTPase family. EF-G/EF-2 subfamily.

The protein resides in the cytoplasm. Catalyzes the GTP-dependent ribosomal translocation step during translation elongation. During this step, the ribosome changes from the pre-translocational (PRE) to the post-translocational (POST) state as the newly formed A-site-bound peptidyl-tRNA and P-site-bound deacylated tRNA move to the P and E sites, respectively. Catalyzes the coordinated movement of the two tRNA molecules, the mRNA and conformational changes in the ribosome. The chain is Elongation factor G 1 from Cupriavidus pinatubonensis (strain JMP 134 / LMG 1197) (Cupriavidus necator (strain JMP 134)).